A 260-amino-acid chain; its full sequence is MFDIGVNLTSSQFAKDRDDVVACAFDAGVNGLLITGTNLRESQQAQKLARQYSSCWSTAGVHPHDSSQWQAATEEAIIELAAQPEVVAIGECGLDFNRNFSTPEEQERAFVAQLRIAADLNMPVFMHCRDAHERFMTLLEPWLDKLPGAVLHCFTGTREEMQACVAHGIYIGITGWVCDERRGLELRELLPLIPAEKLLIETDAPYLLPRDLTPKPSSRRNEPAHLPHILQRIAHWRGEDAAWLAATTDANVKTLFGIAF.

3 residues coordinate a divalent metal cation: Glu91, His127, and His152.

Belongs to the metallo-dependent hydrolases superfamily. TatD-type hydrolase family. TatD subfamily. As to quaternary structure, monomer. Requires Mg(2+) as cofactor. It depends on Mn(2+) as a cofactor.

The protein resides in the cytoplasm. Its function is as follows. 3'-5' exonuclease that prefers single-stranded DNA and RNA. May play a role in the H(2)O(2)-induced DNA damage repair. This chain is 3'-5' ssDNA/RNA exonuclease TatD, found in Escherichia coli (strain K12).